The following is a 1296-amino-acid chain: Phosphoribosylformylglycinamidine synthase (1296 aa).

Residues tryptophan 304–arginine 323 form a disordered region. ATP contacts are provided by residues glycine 306–aspartate 317 and alanine 677. The Mg(2+) site is built by aspartate 678, glutamate 717, asparagine 721, and aspartate 885. Serine 887 is an ATP binding site. A compositionally biased stretch (basic and acidic residues) spans proline 1000 to glutamate 1013. The interval proline 1000–asparagine 1019 is disordered. A Glutamine amidotransferase type-1 domain is found at valine 1043 to glycine 1296. Cysteine 1136 acts as the Nucleophile in catalysis. Active-site residues include histidine 1261 and glutamate 1263.

It in the N-terminal section; belongs to the FGAMS family. In terms of assembly, monomer.

The protein localises to the cytoplasm. The enzyme catalyses N(2)-formyl-N(1)-(5-phospho-beta-D-ribosyl)glycinamide + L-glutamine + ATP + H2O = 2-formamido-N(1)-(5-O-phospho-beta-D-ribosyl)acetamidine + L-glutamate + ADP + phosphate + H(+). The protein operates within purine metabolism; IMP biosynthesis via de novo pathway; 5-amino-1-(5-phospho-D-ribosyl)imidazole from N(2)-formyl-N(1)-(5-phospho-D-ribosyl)glycinamide: step 1/2. Its function is as follows. Phosphoribosylformylglycinamidine synthase involved in the purines biosynthetic pathway. Catalyzes the ATP-dependent conversion of formylglycinamide ribonucleotide (FGAR) and glutamine to yield formylglycinamidine ribonucleotide (FGAM) and glutamate. The protein is Phosphoribosylformylglycinamidine synthase of Yersinia pestis bv. Antiqua (strain Antiqua).